Consider the following 396-residue polypeptide: Putative nickel insertion protein (396 aa).

It belongs to the LarC family.

The protein is Putative nickel insertion protein of Methanosarcina acetivorans (strain ATCC 35395 / DSM 2834 / JCM 12185 / C2A).